The primary structure comprises 555 residues: Glutamine--tRNA ligase (555 aa).

Residues 34–44 carry the 'HIGH' region motif; it reads PEPNGYLHIGH. Residues 35–37 and 41–47 each bind ATP; these read EPN and HIGHAKS. Aspartate 67 and tyrosine 212 together coordinate L-glutamine. Residues threonine 231, 261 to 262, and 269 to 271 each bind ATP; these read RL and MSK. The 'KMSKS' region signature appears at 268–272; that stretch reads VMSKR. The interaction with tRNA stretch occupies residues 317–324; sequence TKQDNTIE.

It belongs to the class-I aminoacyl-tRNA synthetase family. In terms of assembly, monomer.

It localises to the cytoplasm. The catalysed reaction is tRNA(Gln) + L-glutamine + ATP = L-glutaminyl-tRNA(Gln) + AMP + diphosphate. This is Glutamine--tRNA ligase from Citrobacter koseri (strain ATCC BAA-895 / CDC 4225-83 / SGSC4696).